The primary structure comprises 808 residues: Transducin beta-like protein 3 (808 aa).

Position 2 is an N-acetylalanine (Ala-2). 13 WD repeats span residues 64–105 (EDQE…RLWK), 107–146 (IHTA…GTHH), 149–190 (GSPG…CLAV), 193–232 (AHYS…ATRT), 245–284 (LPEE…CVYT), 290–329 (GPGQ…LQKQ), 332–372 (GYSE…CQIL), 374–413 (GHTD…QVMC), 419–459 (GHTH…LSKN), 477–516 (CHDK…LLGV), 519–560 (GHRR…KTFE), 562–602 (HDAS…RTLD), and 604–642 (HEDK…EQAE). Phosphoserine is present on Ser-257. Residue Lys-407 forms a Glycyl lysine isopeptide (Lys-Gly) (interchain with G-Cter in SUMO2) linkage.

In terms of assembly, part of the small subunit (SSU) processome, composed of more than 70 proteins and the RNA chaperone small nucleolar RNA (snoRNA) U3.

It localises to the nucleus. The protein resides in the nucleolus. Part of the small subunit (SSU) processome, first precursor of the small eukaryotic ribosomal subunit. During the assembly of the SSU processome in the nucleolus, many ribosome biogenesis factors, an RNA chaperone and ribosomal proteins associate with the nascent pre-rRNA and work in concert to generate RNA folding, modifications, rearrangements and cleavage as well as targeted degradation of pre-ribosomal RNA by the RNA exosome. The sequence is that of Transducin beta-like protein 3 from Homo sapiens (Human).